Reading from the N-terminus, the 254-residue chain is Mediator of RNA polymerase II transcription subunit 8 (254 aa).

Residues 154 to 190 are a coiled coil; sequence LEEREMGIQNVVTGLRRQLEDDERDEDEDEDDEEEEE. The segment at 167 to 234 is disordered; the sequence is GLRRQLEDDE…SQQVQKGAGP (68 aa). Residues 173-199 are compositionally biased toward acidic residues; it reads EDDERDEDEDEDDEEEEEGEGEDEEME.

The protein belongs to the Mediator complex subunit 8 family. In terms of assembly, component of the Mediator complex.

The protein resides in the nucleus. Functionally, component of the Mediator complex, a coactivator involved in the regulated transcription of nearly all RNA polymerase II-dependent genes. Mediator functions as a bridge to convey information from gene-specific regulatory proteins to the basal RNA polymerase II transcription machinery. Mediator is recruited to promoters by direct interactions with regulatory proteins and serves as a scaffold for the assembly of a functional preinitiation complex with RNA polymerase II and the general transcription factors. The chain is Mediator of RNA polymerase II transcription subunit 8 (med8) from Aspergillus clavatus (strain ATCC 1007 / CBS 513.65 / DSM 816 / NCTC 3887 / NRRL 1 / QM 1276 / 107).